The primary structure comprises 424 residues: D-inositol 3-phosphate glycosyltransferase (424 aa).

Position 21 (His-21) interacts with 1D-myo-inositol 3-phosphate. Residues 27–28 and Gly-35 each bind UDP-N-acetyl-alpha-D-glucosamine; that span reads QP. 1D-myo-inositol 3-phosphate-binding positions include 32–37, Lys-90, Tyr-123, Thr-147, and Arg-167; that span reads DAGGMN. The UDP-N-acetyl-alpha-D-glucosamine site is built by Arg-241, Lys-246, and Gln-299. Mg(2+) is bound by residues Phe-308, Gln-309, and Ala-311. Positions 321 and 329 each coordinate UDP-N-acetyl-alpha-D-glucosamine. Thr-335 lines the Mg(2+) pocket.

It belongs to the glycosyltransferase group 1 family. MshA subfamily. In terms of assembly, homodimer.

The catalysed reaction is 1D-myo-inositol 3-phosphate + UDP-N-acetyl-alpha-D-glucosamine = 1D-myo-inositol 2-acetamido-2-deoxy-alpha-D-glucopyranoside 3-phosphate + UDP + H(+). Catalyzes the transfer of a N-acetyl-glucosamine moiety to 1D-myo-inositol 3-phosphate to produce 1D-myo-inositol 2-acetamido-2-deoxy-glucopyranoside 3-phosphate in the mycothiol biosynthesis pathway. The chain is D-inositol 3-phosphate glycosyltransferase from Mycobacterium avium (strain 104).